The sequence spans 364 residues: Adenosine 3'-phospho 5'-phosphosulfate transporter 2 (364 aa).

The next 10 helical transmembrane spans lie at 39–59 (WLQF…YGYM), 74–94 (WTLT…ECII), 106–126 (IYGV…ASVG), 131–151 (PTQV…GILI), 157–177 (GWID…FTLA), 187–206 (SRGY…IGNI), 231–251 (VFIF…PFFL), 257–277 (TFGY…VVLT), 281–301 (VFGA…TIIL), and 310–330 (FTIE…LNLY).

Belongs to the nucleotide-sugar transporter family. SLC35B subfamily.

The protein localises to the golgi apparatus membrane. In terms of biological role, mediates the transport of adenosine 3'-phospho 5'-phosphosulfate (PAPS), from cytosol into Golgi. PAPS is a universal sulfuryl donor for sulfation events that take place in the Golgi. The polypeptide is Adenosine 3'-phospho 5'-phosphosulfate transporter 2 (pst-2) (Caenorhabditis elegans).